Here is a 188-residue protein sequence, read N- to C-terminus: Threonylcarbamoyl-AMP synthase (188 aa).

One can recognise a YrdC-like domain in the interval 3–188; that stretch reads QLHPSDIKDI…RSGKILRNGQ (186 aa).

It belongs to the SUA5 family. TsaC subfamily.

Its subcellular location is the cytoplasm. The catalysed reaction is L-threonine + hydrogencarbonate + ATP = L-threonylcarbamoyladenylate + diphosphate + H2O. Functionally, required for the formation of a threonylcarbamoyl group on adenosine at position 37 (t(6)A37) in tRNAs that read codons beginning with adenine. Catalyzes the conversion of L-threonine, HCO(3)(-)/CO(2) and ATP to give threonylcarbamoyl-AMP (TC-AMP) as the acyladenylate intermediate, with the release of diphosphate. In Shewanella baltica (strain OS155 / ATCC BAA-1091), this protein is Threonylcarbamoyl-AMP synthase.